Reading from the N-terminus, the 1190-residue chain is Plakophilin-4 (1190 aa).

Residues 1-32 (MPAPEQGSLVEEGQPQTHQEAVSTGPGMEPET) are disordered. A coiled-coil region spans residues 36 to 63 (TILASVKEQELQFQRLTRELEVERQIVA). A disordered region spans residues 73-347 (AESPSIASTS…KRSGMTAVPQ (275 aa)). Serine 75 bears the Phosphoserine mark. A compositionally biased stretch (polar residues) spans 77 to 86 (SIASTSSTEK). Residue threonine 84 is modified to Phosphothreonine. Phosphoserine is present on residues serine 106, serine 132, serine 136, and serine 139. Polar residues-rich tracts occupy residues 138–156 (GSLGNSRSSTQMNSYSDSG), 163–203 (FHNS…QPSV), and 213–229 (SVPSRAQSPSYVTSTGV). A phosphoserine mark is found at serine 220, serine 230, and serine 235. Residues 230–241 (SPSRGSLRTSLG) are compositionally biased toward low complexity. The segment covering 247 to 266 (PSVTDSRPLNPSAYSSSTLP) has biased composition (polar residues). An omega-N-methylarginine mark is found at arginine 253 and arginine 269. Phosphoserine occurs at positions 272, 280, 313, 326, and 336. Residues 289–323 (SVTSRQTSNPNGPVPQYQTTTRVGSPLTLTDAQTR) are compositionally biased toward polar residues. The span at 324-337 (VASPSQGQVGSSSP) shows a compositional bias: low complexity. Position 371 is a phosphotyrosine (tyrosine 371). Residues serine 391, serine 402, and serine 405 each carry the phosphoserine modification. Threonine 411 carries the phosphothreonine modification. The residue at position 414 (tyrosine 414) is a Phosphotyrosine. 3 positions are modified to phosphoserine: serine 421, serine 426, and serine 437. A Phosphotyrosine modification is found at tyrosine 477. Residues serine 509, serine 511, and serine 514 each carry the phosphoserine modification. ARM repeat units lie at residues 517 to 556 (KDPREFAWRDPELPEVIHMLQHQFPSVQANAAAYLQHLCF), 559 to 598 (NKVKMEVYRLGGIKHLVDLLDHRVLEVQKNACGALRNLVF), and 603 to 643 (DENK…NLSS). Residues 772–781 (GKESPSKDSE) are compositionally biased toward basic and acidic residues. A disordered region spans residues 772-809 (GKESPSKDSEPSCWGKKKKKKKRTPQEDQWDGVGPIPG). Serine 775 is subject to Phosphoserine. An ARM 4 repeat occupies 861 to 900 (AYIRAAVRKEKGLPILVELLRMDNDRVVSSVATALRNMAL). Threonine 1012 and threonine 1016 each carry phosphothreonine. Phosphoserine occurs at positions 1044, 1090, 1099, and 1133.

The protein belongs to the beta-catenin family. In terms of assembly, interacts (via the C-terminus) with FRMPD2 (via the PDZ 2 domain). Interacts with PDZD2. Interacts with RHOA; the interaction is detected at the midbody. Interacts with ECT2; the interaction is detected at the midbody. Interacts with CCDC85B.

It is found in the cell junction. Its subcellular location is the desmosome. The protein resides in the cytoplasm. The protein localises to the cytoskeleton. It localises to the spindle. It is found in the spindle pole. Its subcellular location is the midbody. The protein resides in the cell membrane. Plays a role as a regulator of Rho activity during cytokinesis. May play a role in junctional plaques. This is Plakophilin-4 (Pkp4) from Mus musculus (Mouse).